The chain runs to 162 residues: Shikimate kinase (162 aa).

Position 11-16 (11-16) interacts with ATP; the sequence is GSGKSS. A Mg(2+)-binding site is contributed by serine 15. The substrate site is built by aspartate 33, arginine 57, and glycine 80. Position 116 (arginine 116) interacts with ATP. Arginine 132 contacts substrate.

This sequence belongs to the shikimate kinase family. In terms of assembly, monomer. It depends on Mg(2+) as a cofactor.

Its subcellular location is the cytoplasm. It carries out the reaction shikimate + ATP = 3-phosphoshikimate + ADP + H(+). Its pathway is metabolic intermediate biosynthesis; chorismate biosynthesis; chorismate from D-erythrose 4-phosphate and phosphoenolpyruvate: step 5/7. Its function is as follows. Catalyzes the specific phosphorylation of the 3-hydroxyl group of shikimic acid using ATP as a cosubstrate. This is Shikimate kinase from Helicobacter pylori (strain Shi470).